The chain runs to 82 residues: MSYEKVLQAGKIVIGTKQTIRALKEGKAAEVIVAEDADLPIIEKVTAAANEANVPVTKVDSMKKLGKACKIQVGAAAVAILR.

The protein belongs to the eukaryotic ribosomal protein eL8 family.

This chain is RNA-binding protein GK0100, found in Geobacillus kaustophilus (strain HTA426).